The following is a 306-amino-acid chain: Putative HPr kinase/phosphorylase 2 (306 aa).

Active-site residues include His138 and Lys159. Gly153–Ser160 serves as a coordination point for ATP. Ser160 is a Mg(2+) binding site. Asp177 serves as the catalytic Proton acceptor; for phosphorylation activity. Proton donor; for dephosphorylation activity. The interval Leu201–Asn210 is important for the catalytic mechanism of both phosphorylation and dephosphorylation. The interval Gln264–Arg269 is important for the catalytic mechanism of dephosphorylation.

This sequence belongs to the HPrK/P family. In terms of assembly, homohexamer. It depends on Mg(2+) as a cofactor.

It carries out the reaction [HPr protein]-L-serine + ATP = [HPr protein]-O-phospho-L-serine + ADP + H(+). It catalyses the reaction [HPr protein]-O-phospho-L-serine + phosphate + H(+) = [HPr protein]-L-serine + diphosphate. Its function is as follows. Catalyzes the ATP- as well as the pyrophosphate-dependent phosphorylation of a specific serine residue in HPr, a phosphocarrier protein of the phosphoenolpyruvate-dependent sugar phosphotransferase system (PTS). HprK/P also catalyzes the pyrophosphate-producing, inorganic phosphate-dependent dephosphorylation (phosphorolysis) of seryl-phosphorylated HPr (P-Ser-HPr). The two antagonistic activities of HprK/P are regulated by several intracellular metabolites, which change their concentration in response to the absence or presence of rapidly metabolisable carbon sources (glucose, fructose, etc.) in the growth medium. Also phosphorylates/dephosphorylates the HPr-like catabolite repression protein crh on a specific serine residue. Therefore, by controlling the phosphorylation state of HPr and crh, HPrK/P is a sensor enzyme that plays a major role in the regulation of carbon metabolism and sugar transport: it mediates carbon catabolite repression (CCR), and regulates PTS-catalyzed carbohydrate uptake and inducer exclusion. This is Putative HPr kinase/phosphorylase 2 (hprK2) from Oceanobacillus iheyensis (strain DSM 14371 / CIP 107618 / JCM 11309 / KCTC 3954 / HTE831).